A 281-amino-acid chain; its full sequence is Large ribosomal subunit protein uL2 (281 aa).

A disordered region spans residues 215–281 (LGRRPHTRGV…RRNNRKDSKK (67 aa)). Basic and acidic residues predominate over residues 258–269 (KTRDNKSTDKFI). Basic residues predominate over residues 270–281 (VRRRNNRKDSKK).

This sequence belongs to the universal ribosomal protein uL2 family. As to quaternary structure, part of the 50S ribosomal subunit. Forms a bridge to the 30S subunit in the 70S ribosome.

One of the primary rRNA binding proteins. Required for association of the 30S and 50S subunits to form the 70S ribosome, for tRNA binding and peptide bond formation. It has been suggested to have peptidyltransferase activity; this is somewhat controversial. Makes several contacts with the 16S rRNA in the 70S ribosome. This Pelagibacter ubique (strain HTCC1062) protein is Large ribosomal subunit protein uL2.